Consider the following 498-residue polypeptide: Glycerol kinase (498 aa).

Thr12 contacts ADP. ATP is bound by residues Thr12, Thr13, and Ser14. A sn-glycerol 3-phosphate-binding site is contributed by Thr12. Residue Arg16 participates in ADP binding. Sn-glycerol 3-phosphate-binding residues include Arg82, Glu83, Tyr134, and Asp244. The glycerol site is built by Arg82, Glu83, Tyr134, Asp244, and Gln245. Positions 266 and 309 each coordinate ADP. ATP contacts are provided by Thr266, Gly309, Gln313, and Gly410. Residues Gly410 and Asn414 each coordinate ADP.

This sequence belongs to the FGGY kinase family. In terms of assembly, homotetramer and homodimer (in equilibrium).

The enzyme catalyses glycerol + ATP = sn-glycerol 3-phosphate + ADP + H(+). Its pathway is polyol metabolism; glycerol degradation via glycerol kinase pathway; sn-glycerol 3-phosphate from glycerol: step 1/1. Its activity is regulated as follows. Activated by phosphorylation and inhibited by fructose 1,6-bisphosphate (FBP). Functionally, key enzyme in the regulation of glycerol uptake and metabolism. Catalyzes the phosphorylation of glycerol to yield sn-glycerol 3-phosphate. This is Glycerol kinase from Natranaerobius thermophilus (strain ATCC BAA-1301 / DSM 18059 / JW/NM-WN-LF).